Here is a 352-residue protein sequence, read N- to C-terminus: Rhodopsin (352 aa).

At M1 to A36 the chain is on the extracellular side. 2 N-linked (GlcNAc...) asparagine glycosylation sites follow: N2 and N15. The chain crosses the membrane as a helical span at residues Y37–V61. Residues T62 to N73 lie on the Cytoplasmic side of the membrane. The helical transmembrane segment at Y74–Y96 threads the bilayer. The Extracellular portion of the chain corresponds to T97–C110. C110 and C187 form a disulfide bridge. Residues N111–I133 traverse the membrane as a helical segment. Positions E134–W136 match the 'Ionic lock' involved in activated form stabilization motif. Topologically, residues E134–H152 are cytoplasmic. A helical transmembrane segment spans residues A153 to V173. Topologically, residues G174–S202 are extracellular. N-linked (GlcNAc...) asparagine glycosylation occurs at N200. The chain crosses the membrane as a helical span at residues F203–G224. Topologically, residues R225 to R252 are cytoplasmic. Residues M253–Y274 form a helical membrane-spanning segment. Over I275 to L286 the chain is Extracellular. A helical membrane pass occupies residues F287–C308. K296 is modified (N6-(retinylidene)lysine). Over M309–A352 the chain is Cytoplasmic. Residues C322 and C323 are each lipidated (S-palmitoyl cysteine). The interval E331 to A352 is disordered. The segment covering S342 to A352 has biased composition (low complexity).

This sequence belongs to the G-protein coupled receptor 1 family. Opsin subfamily. Post-translationally, phosphorylated on some or all of the serine and threonine residues present in the C-terminal region. Contains one covalently linked retinal chromophore.

Its subcellular location is the membrane. The protein resides in the cell projection. It localises to the cilium. The protein localises to the photoreceptor outer segment. Photoreceptor required for image-forming vision at low light intensity. While most salt water fish species use retinal as chromophore, most freshwater fish use 3-dehydroretinal, or a mixture of retinal and 3-dehydroretinal. Light-induced isomerization of 11-cis to all-trans retinal triggers a conformational change that activates signaling via G-proteins. Subsequent receptor phosphorylation mediates displacement of the bound G-protein alpha subunit by arrestin and terminates signaling. This Gobius niger (Black goby) protein is Rhodopsin (rho).